The primary structure comprises 250 residues: Phosphoribosylaminoimidazole-succinocarboxamide synthase (250 aa).

It belongs to the SAICAR synthetase family.

The catalysed reaction is 5-amino-1-(5-phospho-D-ribosyl)imidazole-4-carboxylate + L-aspartate + ATP = (2S)-2-[5-amino-1-(5-phospho-beta-D-ribosyl)imidazole-4-carboxamido]succinate + ADP + phosphate + 2 H(+). The protein operates within purine metabolism; IMP biosynthesis via de novo pathway; 5-amino-1-(5-phospho-D-ribosyl)imidazole-4-carboxamide from 5-amino-1-(5-phospho-D-ribosyl)imidazole-4-carboxylate: step 1/2. The sequence is that of Phosphoribosylaminoimidazole-succinocarboxamide synthase from Parasynechococcus marenigrum (strain WH8102).